Here is a 189-residue protein sequence, read N- to C-terminus: MDQLRRSLQDAPIIEKDGYHYFVHPISDGVPMLEPSLLREIVIKIIRKASLENVDKIVTPAAMGIHISTAVSLMTDIPLVVIRKRQYGLEGEVALFQETGYSENQMYINDVEAGDRVLVLDDVLSTGGTLKAITEALGDIGAEVEDVVAVIKKVGGENKIDASPYAVKTLINVDVVDGEVVIVDERGDG.

It belongs to the purine/pyrimidine phosphoribosyltransferase family. Archaeal HPRT subfamily.

In terms of biological role, may catalyze a purine salvage reaction, the substrate is unknown. The chain is HGPRTase-like protein 2 from Halalkalicoccus jeotgali (strain DSM 18796 / CECT 7217 / JCM 14584 / KCTC 4019 / B3).